The sequence spans 92 residues: Small ribosomal subunit protein bS20 (92 aa).

The disordered stretch occupies residues 1–28 (MANTASAEKRNRQAQKRRARNVQVRTGV).

The protein belongs to the bacterial ribosomal protein bS20 family.

Binds directly to 16S ribosomal RNA. This chain is Small ribosomal subunit protein bS20, found in Anaeromyxobacter dehalogenans (strain 2CP-C).